We begin with the raw amino-acid sequence, 218 residues long: uncharacterized protein (218 aa).

Residues Arg-7–Ala-123 enclose the Response regulatory domain. Residue Asp-58 is modified to 4-aspartylphosphate. The HTH luxR-type domain maps to Ala-150 to Gly-215. Residues Asn-174–His-193 constitute a DNA-binding region (H-T-H motif).

Phosphorylated by YxjM.

The protein resides in the cytoplasm. Its function is as follows. Probable member of the two-component regulatory system YxjM/YxjL. This is an uncharacterized protein from Bacillus subtilis (strain 168).